The chain runs to 244 residues: 1-(5-phosphoribosyl)-5-[(5-phosphoribosylamino)methylideneamino] imidazole-4-carboxamide isomerase (244 aa).

Asp15 functions as the Proton acceptor in the catalytic mechanism. Asp136 acts as the Proton donor in catalysis.

Belongs to the HisA/HisF family.

It is found in the cytoplasm. It catalyses the reaction 1-(5-phospho-beta-D-ribosyl)-5-[(5-phospho-beta-D-ribosylamino)methylideneamino]imidazole-4-carboxamide = 5-[(5-phospho-1-deoxy-D-ribulos-1-ylimino)methylamino]-1-(5-phospho-beta-D-ribosyl)imidazole-4-carboxamide. The protein operates within amino-acid biosynthesis; L-histidine biosynthesis; L-histidine from 5-phospho-alpha-D-ribose 1-diphosphate: step 4/9. This chain is 1-(5-phosphoribosyl)-5-[(5-phosphoribosylamino)methylideneamino] imidazole-4-carboxamide isomerase, found in Dehalococcoides mccartyi (strain CBDB1).